We begin with the raw amino-acid sequence, 121 residues long: Flagellar hook-basal body complex protein FliE (121 aa).

This sequence belongs to the FliE family.

It is found in the bacterial flagellum basal body. The sequence is that of Flagellar hook-basal body complex protein FliE from Saccharophagus degradans (strain 2-40 / ATCC 43961 / DSM 17024).